The chain runs to 105 residues: Vacuolar ATPase assembly integral membrane protein VMA21 homolog (105 aa).

The disordered stretch occupies residues 1–26 (MSTKNKKAAGGNGGAPKQTRQQSHDS). At 1 to 36 (MSTKNKKAAGGNGGAPKQTRQQSHDSQDYSSFKTVL) the chain is on the cytoplasmic side. The helical transmembrane segment at 37–57 (FYCMLIVFLPVLTFFVLKGFV) threads the bilayer. At 58–68 (LDQFLDISEVK) the chain is on the lumenal side. Residues 69–89 (VNIASAVGAVVALHIALGLYI) traverse the membrane as a helical segment. Topologically, residues 90-105 (YRAYFGAPGSKGSKTD) are cytoplasmic.

It belongs to the VMA21 family.

Its subcellular location is the endoplasmic reticulum membrane. The protein localises to the endoplasmic reticulum-Golgi intermediate compartment membrane. It is found in the cytoplasmic vesicle. It localises to the COPII-coated vesicle membrane. Its function is as follows. Required for the assembly of the V0 complex of the vacuolar ATPase (V-ATPase) in the endoplasmic reticulum. The sequence is that of Vacuolar ATPase assembly integral membrane protein VMA21 homolog from Drosophila simulans (Fruit fly).